A 358-amino-acid polypeptide reads, in one-letter code: Isopentenyl-diphosphate delta-isomerase (358 aa).

A substrate-binding site is contributed by 12-13; it reads RK. Residues 69 to 71, serine 99, and asparagine 128 contribute to the FMN site; that span reads AMT. Glutamine 158 lines the substrate pocket. A Mg(2+)-binding site is contributed by glutamate 159. Residues lysine 190, threonine 220, 267 to 269, and 288 to 289 each bind FMN; these read GIR and AG.

This sequence belongs to the IPP isomerase type 2 family. As to quaternary structure, homooctamer. Dimer of tetramers. Requires FMN as cofactor. The cofactor is NADPH. Mg(2+) serves as cofactor.

Its subcellular location is the cytoplasm. It catalyses the reaction isopentenyl diphosphate = dimethylallyl diphosphate. Involved in the biosynthesis of isoprenoids. Catalyzes the 1,3-allylic rearrangement of the homoallylic substrate isopentenyl (IPP) to its allylic isomer, dimethylallyl diphosphate (DMAPP). The sequence is that of Isopentenyl-diphosphate delta-isomerase from Listeria monocytogenes serotype 4a (strain HCC23).